The sequence spans 417 residues: Transcobalamin-1 (417 aa).

The signal sequence occupies residues 1–25 (MRQSHQLPLVGLLLFSLIPSQLCQS). The globular N-terminal alpha domain stretch occupies residues 24–308 (QSCVVSEKDY…DVTKLLLVPK (285 aa)). Residue N90 is glycosylated (N-linked (GlcNAc...) asparagine). Cyanocob(III)alamin is bound at residue 143-147 (TNYYQ). C156 and C198 are joined by a disulfide. N-linked (GlcNAc...) asparagine glycosylation is found at N161, N166, and N179. The cyanocob(III)alamin site is built by D187 and Q287. The tract at residues 309–327 (VQVNITDEPVPVVPTLSPE) is flexible linker. N-linked (GlcNAc...) asparagine glycans are attached at residues N312, N328, N345, and N360. The tract at residues 328-417 (NISVIYCVKI…GIMLSKMESI (90 aa)) is globular C-terminal beta domain. Cyanocob(III)alamin-binding positions include 376-377 (YI) and 393-395 (WEH).

The protein belongs to the eukaryotic cobalamin transport proteins family. Contains about 30% carbohydrates. As to expression, haptocorrins are a family of cobalamin-binding glycoproteins found in blood, salivary and mucosal secretions.

It localises to the secreted. In terms of biological role, binds vitamin B12 with femtomolar affinity and protects it from the acidic environment of the stomach. Binds to cobalamin and to cobalamin analogs such as cobinamide. The protein is Transcobalamin-1 (TCN1) of Sus scrofa (Pig).